Consider the following 286-residue polypeptide: Digeranylgeranylglyceryl phosphate synthase (286 aa).

8 helical membrane-spanning segments follow: residues 21 to 41 (AVAA…FAVT), 42 to 62 (TAHV…GNAI), 96 to 116 (FLFV…IVLA), 133 to 155 (LPGV…GAAA), 162 to 181 (FGVV…REII), 214 to 234 (VLLV…FGIW), 235 to 255 (YLTL…QAPD), and 266 to 286 (RGMF…VAGI).

This sequence belongs to the UbiA prenyltransferase family. DGGGP synthase subfamily. The cofactor is Mg(2+).

The protein localises to the cell membrane. It carries out the reaction sn-3-O-(geranylgeranyl)glycerol 1-phosphate + (2E,6E,10E)-geranylgeranyl diphosphate = 2,3-bis-O-(geranylgeranyl)-sn-glycerol 1-phosphate + diphosphate. It participates in membrane lipid metabolism; glycerophospholipid metabolism. In terms of biological role, prenyltransferase that catalyzes the transfer of the geranylgeranyl moiety of geranylgeranyl diphosphate (GGPP) to the C2 hydroxyl of (S)-3-O-geranylgeranylglyceryl phosphate (GGGP). This reaction is the second ether-bond-formation step in the biosynthesis of archaeal membrane lipids. This chain is Digeranylgeranylglyceryl phosphate synthase, found in Haloquadratum walsbyi (strain DSM 16790 / HBSQ001).